The sequence spans 52 residues: Large ribosomal subunit protein bL32c (52 aa).

The protein belongs to the bacterial ribosomal protein bL32 family.

It localises to the plastid. It is found in the chloroplast. The sequence is that of Large ribosomal subunit protein bL32c from Capsella bursa-pastoris (Shepherd's purse).